Consider the following 599-residue polypeptide: UPF0313 protein UNCMA_01890 (599 aa).

The region spanning 281–557 (EDIPALRTVR…RALLQYKNPE (277 aa)) is the Radical SAM core domain. The [4Fe-4S] cluster site is built by C299, C303, and C306.

Belongs to the UPF0313 family. [4Fe-4S] cluster is required as a cofactor.

The chain is UPF0313 protein UNCMA_01890 from Methanocella arvoryzae (strain DSM 22066 / NBRC 105507 / MRE50).